Here is a 157-residue protein sequence, read N- to C-terminus: MRLPRGVGDAAELRKSLKPLLEKRRRARINESLSQLKGLVLPLLGAETSRYSKLEKADILEMTVRFLREQPASVCSTEAPGSLDSYLEGYRACLARLARVLPACSVLEPAVSARLLEHLRQRTVSGGPPSLTPASASAPAPSPPVPPPSSLGLWRPW.

One can recognise a bHLH domain in the interval L13–Q70. The Orange domain occupies Y86 to L119. Residues V124–W157 form a disordered region. Positions S125–P139 are enriched in low complexity. Pro residues predominate over residues A140–S149. Positions W154 to W157 match the WRPW motif motif.

As to quaternary structure, transcription repression requires formation of a complex with a corepressor protein of the Groucho/TLE family.

Its subcellular location is the nucleus. Functionally, transcriptional repressor of genes that require a bHLH protein for their transcription. This is Transcription factor HES-2 (Hes2) from Rattus norvegicus (Rat).